We begin with the raw amino-acid sequence, 520 residues long: GMP synthase [glutamine-hydrolyzing] (520 aa).

Residues 12–205 (KIIVLDYGSQ…AIFICGARGD (194 aa)) enclose the Glutamine amidotransferase type-1 domain. C89 acts as the Nucleophile in catalysis. Active-site residues include H179 and E181. In terms of domain architecture, GMPS ATP-PPase spans 206 to 395 (WSMDNFIDMQ…LGMPENIVWR (190 aa)). Residue 233 to 239 (SGGVDSS) coordinates ATP.

Homodimer.

The enzyme catalyses XMP + L-glutamine + ATP + H2O = GMP + L-glutamate + AMP + diphosphate + 2 H(+). Its pathway is purine metabolism; GMP biosynthesis; GMP from XMP (L-Gln route): step 1/1. Functionally, catalyzes the synthesis of GMP from XMP. The polypeptide is GMP synthase [glutamine-hydrolyzing] (Streptococcus uberis (strain ATCC BAA-854 / 0140J)).